The following is a 288-amino-acid chain: NAD(P)H-hydrate epimerase (288 aa).

The N-terminal 48 residues, 1-48 (MSALRALLGLGLLAAGSRLRRVPGRAGACPAGSAWWEARRPHSGGGGE), are a transit peptide targeting the mitochondrion. The YjeF N-terminal domain maps to 65-275 (AQAVDEELFN…ALEKKYQLNL (211 aa)). Residue 119–123 (NNGGD) coordinates (6S)-NADPHX. N120 contacts K(+). Position 144 is an N6-succinyllysine (K144). D185 is a binding site for K(+). (6S)-NADPHX-binding positions include 189–195 (GFSFKGD) and D218. S221 lines the K(+) pocket.

Belongs to the NnrE/AIBP family. In terms of assembly, homodimer. Interacts with APOA1 and APOA2. It depends on K(+) as a cofactor. In terms of processing, undergoes physiological phosphorylation during sperm capacitation, downstream to PKA activation.

The protein resides in the mitochondrion. It localises to the secreted. It catalyses the reaction (6R)-NADHX = (6S)-NADHX. The enzyme catalyses (6R)-NADPHX = (6S)-NADPHX. In terms of biological role, catalyzes the epimerization of the S- and R-forms of NAD(P)HX, a damaged form of NAD(P)H that is a result of enzymatic or heat-dependent hydration. This is a prerequisite for the S-specific NAD(P)H-hydrate dehydratase to allow the repair of both epimers of NAD(P)HX. Accelerates cholesterol efflux from endothelial cells to high-density lipoprotein (HDL) and thereby regulates angiogenesis. This chain is NAD(P)H-hydrate epimerase, found in Canis lupus familiaris (Dog).